Reading from the N-terminus, the 230-residue chain is Large ribosomal subunit protein uL1 (230 aa).

The protein belongs to the universal ribosomal protein uL1 family. In terms of assembly, part of the 50S ribosomal subunit.

In terms of biological role, binds directly to 23S rRNA. The L1 stalk is quite mobile in the ribosome, and is involved in E site tRNA release. Its function is as follows. Protein L1 is also a translational repressor protein, it controls the translation of the L11 operon by binding to its mRNA. The chain is Large ribosomal subunit protein uL1 from Nitrosomonas europaea (strain ATCC 19718 / CIP 103999 / KCTC 2705 / NBRC 14298).